Consider the following 227-residue polypeptide: Thymidylate synthase (227 aa).

Position 89–90 (89–90 (RR)) interacts with dUMP. The active-site Nucleophile is cysteine 109. DUMP is bound by residues 129–132 (RSND), asparagine 140, and 170–172 (HVY). Residue aspartate 132 coordinates (6R)-5,10-methylene-5,6,7,8-tetrahydrofolate.

This sequence belongs to the thymidylate synthase family. Bacterial-type ThyA subfamily. As to quaternary structure, homodimer.

The protein resides in the cytoplasm. The enzyme catalyses dUMP + (6R)-5,10-methylene-5,6,7,8-tetrahydrofolate = 7,8-dihydrofolate + dTMP. Its pathway is pyrimidine metabolism; dTTP biosynthesis. Its function is as follows. Catalyzes the reductive methylation of 2'-deoxyuridine-5'-monophosphate (dUMP) to 2'-deoxythymidine-5'-monophosphate (dTMP) while utilizing 5,10-methylenetetrahydrofolate (mTHF) as the methyl donor and reductant in the reaction, yielding dihydrofolate (DHF) as a by-product. This enzymatic reaction provides an intracellular de novo source of dTMP, an essential precursor for DNA biosynthesis. The polypeptide is Thymidylate synthase (Bacillus atrophaeus).